The chain runs to 217 residues: Large ribosomal subunit protein eL6 (217 aa).

It belongs to the eukaryotic ribosomal protein eL6 family. As to quaternary structure, component of the large ribosomal subunit. May bind IPO9 with low affinity.

It is found in the cytoplasm. The protein localises to the cytosol. Its subcellular location is the rough endoplasmic reticulum. In terms of biological role, component of the large ribosomal subunit. The sequence is that of Large ribosomal subunit protein eL6 (rpl-6) from Caenorhabditis elegans.